A 142-amino-acid polypeptide reads, in one-letter code: Putative pre-16S rRNA nuclease (142 aa).

The protein belongs to the YqgF nuclease family.

It localises to the cytoplasm. In terms of biological role, could be a nuclease involved in processing of the 5'-end of pre-16S rRNA. This Blochmanniella floridana protein is Putative pre-16S rRNA nuclease.